Consider the following 255-residue polypeptide: tRNA uridine(34) hydroxylase (255 aa).

The 95-residue stretch at 131 to 225 (AAPDTLVLDT…YLEEVPEAQS (95 aa)) folds into the Rhodanese domain. Cysteine 185 acts as the Cysteine persulfide intermediate in catalysis.

Belongs to the TrhO family.

The enzyme catalyses uridine(34) in tRNA + AH2 + O2 = 5-hydroxyuridine(34) in tRNA + A + H2O. Functionally, catalyzes oxygen-dependent 5-hydroxyuridine (ho5U) modification at position 34 in tRNAs. The chain is tRNA uridine(34) hydroxylase from Bradyrhizobium diazoefficiens (strain JCM 10833 / BCRC 13528 / IAM 13628 / NBRC 14792 / USDA 110).